The following is a 98-amino-acid chain: uncharacterized protein (98 aa).

The tract at residues 58-98 (ARFPVEDTAGGLLRTGGHRPQISDEEVSKRHHEQSHGQEDH) is disordered.

This is an uncharacterized protein from Saccharomyces cerevisiae (strain ATCC 204508 / S288c) (Baker's yeast).